The sequence spans 467 residues: Ethanolamine ammonia-lyase reactivase EutA (467 aa).

The protein belongs to the EutA family.

The protein localises to the bacterial microcompartment. The protein operates within amine and polyamine degradation; ethanolamine degradation. In terms of biological role, reactivates suicidally inhibited ethanolamine ammonia-lyase (EAL), cyanocobalamin-inactivated EAL and O(2)-inactivated EAL; requires Mg(2+), ATP and adenosylcobalamin. Reactivation probably occurs by the ATP-dependent exchange of cobalamin. Protects EAL from inhibition by CN-B12, does not have adenosylation activity. Functionally, expression of the eut operon allows this bacteria to use ethanolamine as a carbon, nitrogen and energy source. It relies on cobalamin (vitamin B12) both as a cofactor for the ethanolamine ammonia-lyase (EAL) activity and to induce the operon. EA enhances bacterial survival in macrophages in a concentration-dependent manner, suggesting it is an important nutrient during infection. The protein is Ethanolamine ammonia-lyase reactivase EutA of Salmonella typhimurium (strain LT2 / SGSC1412 / ATCC 700720).